A 270-amino-acid chain; its full sequence is Cytosolic Fe-S cluster assembly factor NUBP2 homolog (270 aa).

ATP is bound at residue 21–28 (GKGGVGKS). Positions 195 and 198 each coordinate [4Fe-4S] cluster.

This sequence belongs to the Mrp/NBP35 ATP-binding proteins family. NUBP2/CFD1 subfamily. In terms of assembly, heterotetramer of 2 NUBP1 and 2 NUBP2 chains. [4Fe-4S] cluster is required as a cofactor.

The protein localises to the cytoplasm. Its function is as follows. Component of the cytosolic iron-sulfur (Fe/S) protein assembly (CIA) machinery. Required for maturation of extramitochondrial Fe-S proteins. The NUBP1-NUBP2 heterotetramer forms a Fe-S scaffold complex, mediating the de novo assembly of an Fe-S cluster and its transfer to target apoproteins. The chain is Cytosolic Fe-S cluster assembly factor NUBP2 homolog from Nematostella vectensis (Starlet sea anemone).